Consider the following 95-residue polypeptide: Small ubiquitin-related modifier 2 (95 aa).

Residue K11 forms a Glycyl lysine isopeptide (Lys-Gly) (interchain with G-Cter in SUMO) linkage. Positions 16 to 95 (DHINLKVAGQ…VFQQQTGGSF (80 aa)) constitute a Ubiquitin-like domain. Residue G93 forms a Glycyl lysine isopeptide (Gly-Lys) (interchain with K-? in acceptor proteins) linkage. Residues 94-95 (SF) constitute a propeptide that is removed on maturation.

It belongs to the ubiquitin family. SUMO subfamily. In terms of assembly, interacts with sae2 and ube2i. Covalently attached to a number of proteins, including top2. In terms of processing, polymeric chains can be formed through Lys-11 cross-linking. Post-translationally, cleavage of precursor form by a sentrin-specific protease is necessary for function.

The protein localises to the nucleus. Its function is as follows. Ubiquitin-like protein that can be covalently attached to proteins as a monomer or as a lysine-linked polymer. Covalent attachment via an isopeptide bond to its substrates requires prior activation by the E1 complex sae1-sae2 and linkage to the E2 enzyme ube2i, and can be promoted by an E3 ligase such as pias1-4. This post-translational modification on lysine residues of proteins plays a crucial role in a number of cellular processes such as nuclear transport, DNA replication and repair, mitosis and signal transduction. Polymeric sumo2 chains are also susceptible to polyubiquitination which functions as a signal for proteasomal degradation of modified proteins. The protein is Small ubiquitin-related modifier 2 (sumo2) of Xenopus tropicalis (Western clawed frog).